A 387-amino-acid polypeptide reads, in one-letter code: Involucrin (387 aa).

2 disordered regions span residues 1–319 (MSQQ…VHLG) and 347–387 (VCIP…LKQE). A compositionally biased stretch (polar residues) spans 28-37 (NTQQDQMKQP). The span at 62–71 (QVPEQECEPQ) shows a compositional bias: low complexity. Composition is skewed to basic and acidic residues over residues 85-96 (KQQEPQEQEVHP), 104-115 (QEQEAHLGKKQE), 147-179 (QEVH…KQLQ), and 231-245 (QLEK…ELHL).

It belongs to the involucrin family. As to quaternary structure, directly or indirectly cross-linked to cornifelin (CNFN). Substrate of transglutaminase. Specific glutamines or lysines are cross-linked to keratins, desmoplakin and to inter involucrin molecules. Keratinocytes of epidermis and other stratified squamous epithelia.

The protein localises to the cytoplasm. Its function is as follows. Part of the insoluble cornified cell envelope (CE) of stratified squamous epithelia. This Cephalopachus bancanus (Western tarsier) protein is Involucrin (IVL).